The following is a 785-amino-acid chain: Probable serine protease Ga0098714_109514 (785 aa).

2 stretches are compositionally biased toward basic and acidic residues: residues 470–481 (LDHGKNGREGGR) and 491–501 (DGPEHPNHYAD). Disordered stretches follow at residues 470–503 (LDHG…ADID) and 608–629 (DGDA…EEVS).

Belongs to the peptidase S1 family.

Its function is as follows. Probably a dedicated protease for substrate gasdermin bGSDM; cleaves the bGSDM precursor, releasing the pore-forming moiety, which integrates into the membrane and triggers cell death. Involved in defense against bacteriophages. Expression of gasdermin bGSDM and this neighboring protease is toxic in E.coli on solid medium. In Bradyrhizobium tropiciagri, this protein is Probable serine protease Ga0098714_109514.